Here is an 89-residue protein sequence, read N- to C-terminus: MSVTAERKAEIIKANATKAGDTGSPEVQVAILSERINNLTSHFKTHGKDNHSRRGLLKLVSTRRSLLDYLKKNDEARYKALLEKHNIRR.

The protein belongs to the universal ribosomal protein uS15 family. As to quaternary structure, part of the 30S ribosomal subunit. Forms a bridge to the 50S subunit in the 70S ribosome, contacting the 23S rRNA.

In terms of biological role, one of the primary rRNA binding proteins, it binds directly to 16S rRNA where it helps nucleate assembly of the platform of the 30S subunit by binding and bridging several RNA helices of the 16S rRNA. Forms an intersubunit bridge (bridge B4) with the 23S rRNA of the 50S subunit in the ribosome. This chain is Small ribosomal subunit protein uS15, found in Bradyrhizobium sp. (strain BTAi1 / ATCC BAA-1182).